A 216-amino-acid polypeptide reads, in one-letter code: Lipoprotein-releasing system ATP-binding protein LolD (216 aa).

The ABC transporter domain occupies 2–216 (IHLEGITKSF…TIHMVDGNII (215 aa)). An ATP-binding site is contributed by 34 to 41 (GPSGAGKT).

It belongs to the ABC transporter superfamily. Lipoprotein translocase (TC 3.A.1.125) family. In terms of assembly, the complex is composed of two ATP-binding proteins (LolD) and two transmembrane proteins (LolC and LolE).

It localises to the cell inner membrane. In terms of biological role, part of the ABC transporter complex LolCDE involved in the translocation of mature outer membrane-directed lipoproteins, from the inner membrane to the periplasmic chaperone, LolA. Responsible for the formation of the LolA-lipoprotein complex in an ATP-dependent manner. The polypeptide is Lipoprotein-releasing system ATP-binding protein LolD (Bacteroides fragilis (strain YCH46)).